Here is a 275-residue protein sequence, read N- to C-terminus: MASELEYESVLCVKPDVSVYRIPPRASNRGYRASDWKLDQPDWTGRLRITSKGKVAYIKLEDKVSGELFAQAPVEQYPGIAVETVTDSSRYFVIRIQDGTGRSAFIGIGFSDRGDAFDFNVSLQDHFKWVKQESEISKESQEMDSRPKLDLGFKEGQTIKLSIGNITTKKGGTSKPKTAGTGGLSLLPPPPGGKVTIPPPSSSVAISNHVTPPPIPKSNHGGSDADILLDLDSPAPITTPAPAPVSASNDLWGDFSTASSSVPNQAPQPSNWVQF.

Residues 166 to 190 (ITTKKGGTSKPKTAGTGGLSLLPPP) are disordered. Over residues 167–179 (TTKKGGTSKPKTA) the composition is skewed to low complexity. Thr-211 carries the phosphothreonine modification. Residues 215–275 (IPKSNHGGSD…APQPSNWVQF (61 aa)) form a disordered region. Short sequence motifs (WXXF motif) lie at residues 252–255 (WGDF) and 272–275 (WVQF). Polar residues predominate over residues 256 to 275 (STASSSVPNQAPQPSNWVQF).

This sequence belongs to the NECAP family. As to quaternary structure, interacts with AP1G1 and AP2A1 components of the adapter protein complexes AP-1 and AP-2. Interacts with the GAE domain proteins GGA1, GGA2 and GGA3.

It is found in the cytoplasmic vesicle. The protein localises to the clathrin-coated vesicle membrane. The protein resides in the cell membrane. Involved in endocytosis. In Bos taurus (Bovine), this protein is Adaptin ear-binding coat-associated protein 1 (NECAP1).